The chain runs to 3942 residues: Protein bassoon (3942 aa).

Residues 1–158 are disordered; sequence MGNEASLEGG…PTSPYSVPQI (158 aa). Glycine 2 is lipidated: N-myristoyl glycine. A compositionally biased stretch (gly residues) spans 9 to 29; the sequence is GGAGEGPLPPGGSGLGPGPGA. A compositionally biased stretch (low complexity) spans 31–52; sequence KPPSALAGGGQLPVAGAARAAG. Positions 53-71 are enriched in pro residues; sequence PPTPGLGPVPGPGPGPGPG. A 5 X 2 AA tandem repeats of P-G region spans residues 62–71; it reads PGPGPGPGPG. Polar residues-rich tracts occupy residues 85-98 and 127-154; these read SQRT…QASA and QVDS…SPYS. A Phosphoserine modification is found at serine 142. At arginine 145 the chain carries Omega-N-methylarginine. 2 consecutive C4-type zinc fingers follow at residues 167–190 and 195–217; these read CPIC…CTQC and CNQC…CLNC. Disordered stretches follow at residues 228-341 and 362-457; these read TTAP…EQTQ and LMSV…KTMP. A compositionally biased stretch (polar residues) spans 230 to 240; the sequence is APRSKSQQQLH. 2 positions are modified to phosphoserine: serine 241 and serine 245. Residues 362 to 379 are compositionally biased toward polar residues; that stretch reads LMSVQPEADTQGQPSPSK. Positions 395–407 are enriched in pro residues; sequence PRPPGSGPGPGPT. 2 consecutive C4-type zinc fingers follow at residues 464-487 and 492-514; these read CPLC…CTAC and CNLC…CLNC. Disordered regions lie at residues 525–937, 950–1258, 1309–1553, and 1573–1625; these read GEPA…LQGG, GSYG…VAES, MDPM…WQQS, and RMVH…PSAG. Residues 528-541 show a composition bias toward pro residues; the sequence is APLPLPTPQQPPAG. Tandem repeats lie at residues 570 to 576, 577 to 583, 584 to 590, 591 to 597, and 598 to 604. Residues 570 to 604 are 5 X 7 AA tandem repeats of K-A-S-P-Q-[AT]-[AT]; it reads KASPQATKASPQATKASPQATKASPQTTKASPQAK. Residues 573–600 show a composition bias toward polar residues; the sequence is PQATKASPQATKASPQATKASPQTTKAS. Pro residues predominate over residues 632–645; it reads VPKPPPETTVPPGT. Polar residues predominate over residues 684 to 693; that stretch reads QDLSRSPQSL. Positions 694-708 are enriched in low complexity; the sequence is SDTGYSSDGVSSSQS. Residues 709–718 are compositionally biased toward polar residues; that stretch reads EITGVVQQEV. Acidic residues-rich tracts occupy residues 787–802 and 865–876; these read FDSD…EDDS and SAEEDNLEEDDT. Arginine 881 bears the Omega-N-methylarginine mark. Residues 895 to 905 show a composition bias toward basic and acidic residues; that stretch reads PRPESSQEPKR. Position 980 is a phosphoserine (serine 980). Residues 994–1011 are compositionally biased toward low complexity; it reads PASTPSYTSGTSPTSLSS. Over residues 1049–1062 the composition is skewed to acidic residues; it reads DSSEEEELREEEEL. Serine 1050 and serine 1051 each carry phosphoserine. Residues 1063–1076 show a composition bias toward basic and acidic residues; that stretch reads LREQEKMREVEQQR. Serine 1100 is modified (phosphoserine). Threonine 1102 carries the post-translational modification Phosphothreonine. A phosphoserine mark is found at serine 1108 and serine 1114. The segment covering 1117–1132 has biased composition (basic and acidic residues); sequence EELRQAAEMEELHRSS. Low complexity-rich tracts occupy residues 1133–1143 and 1173–1190; these read CSEYSPSPSLD and SPTE…SGRP. A compositionally biased stretch (basic and acidic residues) spans 1192–1207; sequence KSAEEAYEDMMRKAEM. Low complexity predominate over residues 1209 to 1219; that stretch reads QRQQGQVAGAR. Residues 1226-1240 are compositionally biased toward polar residues; that stretch reads SQPTGPRSQGSFEYQ. Position 1236 is a phosphoserine (serine 1236). Over residues 1333-1343 the composition is skewed to low complexity; it reads SFSTSTSSDSS. A glycan (O-linked (GlcNAc) threonine) is linked at threonine 1354. A compositionally biased stretch (basic and acidic residues) spans 1357 to 1366; sequence FAKEPQDPLK. The segment covering 1370–1438 has biased composition (polar residues); the sequence is SPVSSTLTSK…TTANYGSQTE (69 aa). A glycan (O-linked (GlcNAc) threonine) is linked at threonine 1395. Phosphoserine occurs at positions 1482, 1491, and 1493. The segment covering 1488–1498 has biased composition (low complexity); it reads STPSESPTFSP. Composition is skewed to polar residues over residues 1508 to 1522 and 1573 to 1609; these read EFST…SSDI and RMVH…SQMP. The O-linked (GlcNAc) serine glycan is linked to serine 1707. 2 positions are modified to omega-N-methylarginine: arginine 1792 and arginine 1796. Arginine 1806 is subject to Asymmetric dimethylarginine; alternate. Arginine 1806 is modified (omega-N-methylarginine; alternate). Omega-N-methylarginine is present on arginine 1818. Disordered stretches follow at residues 1831–1865 and 1926–1977; these read GVGL…TRKP and PSAP…QRPY. The segment covering 1844-1856 has biased composition (basic and acidic residues); the sequence is AEPHRATPAELRS. Threonine 1934 is a glycosylation site (O-linked (GlcNAc) threonine). Phosphoserine is present on residues serine 1990 and serine 2046. Omega-N-methylarginine is present on residues arginine 2051 and arginine 2081. Arginine 2255, arginine 2265, and arginine 2270 each carry asymmetric dimethylarginine. Threonine 2318 carries O-linked (GlcNAc) threonine glycosylation. Disordered regions lie at residues 2327 to 2378, 2476 to 2504, and 2524 to 2663; these read PVAP…KQQE, EQKQ…TELA, and TEGP…STTA. Residues 2329–2342 show a composition bias toward pro residues; that stretch reads APAPGPAPAPPPGQ. Residues 2361 to 2378 show a composition bias toward basic and acidic residues; the sequence is ASEKEEASQEDRQRKQQE. Coiled coils occupy residues 2366 to 2422 and 2453 to 2483; these read EASQ…LVQR and LAQQ…RQKA. Residue threonine 2524 is glycosylated (O-linked (GlcNAc) threonine). The span at 2541–2551 shows a compositional bias: polar residues; sequence SSASDMSLQTE. Serine 2578 carries the phosphoserine modification. Phosphothreonine is present on residues threonine 2595 and threonine 2622. The span at 2643–2655 shows a compositional bias: basic and acidic residues; sequence RHSDSGSDSKHDA. A glycan (O-linked (GlcNAc) threonine) is linked at threonine 2700. Positions 2730 to 3278 are interaction with DAO; the sequence is EPDGQAQGVA…GGVSGRPGKD (549 aa). Phosphoserine is present on residues serine 2811, serine 2860, and serine 2866. The disordered stretch occupies residues 2854–2874; that stretch reads TLQRSLSDPKPLSPTAEESAK. Threonine 2945 carries O-linked (GlcNAc) threonine glycosylation. Serine 3022 carries the phosphoserine modification. 3 disordered regions span residues 3051-3409, 3431-3560, and 3581-3917; these read PATP…LTSR, YYGV…PRAH, and EAYH…KILP. A compositionally biased stretch (polar residues) spans 3073-3083; that stretch reads TAGSSGPTQNG. Low complexity predominate over residues 3089–3114; the sequence is APTYTGPSTYPAPTYPPGTGYPAEPG. Over residues 3202–3211 the composition is skewed to basic and acidic residues; sequence KAPEHPRGSD. The segment covering 3212–3237 has biased composition (polar residues); that stretch reads RSSVSQSPAPTYPSDSHYTSLEQNVP. A Phosphoserine modification is found at serine 3301. 2 stretches are compositionally biased toward basic and acidic residues: residues 3330-3342 and 3372-3391; these read GDSD…RADK and QGME…KDVE. Serine 3382 is subject to Phosphoserine. Over residues 3447 to 3461 the composition is skewed to low complexity; that stretch reads YGSSSRSRMASAYSG. Residues 3464–3487 are compositionally biased toward basic and acidic residues; that stretch reads LSSHDYSSRGKGYERERDTAERLQ. Residue arginine 3502 is modified to Omega-N-methylarginine. Residues 3520–3534 are compositionally biased toward low complexity; the sequence is PLGRPRPAGGALPPG. 2 stretches are compositionally biased toward basic and acidic residues: residues 3549–3560 and 3592–3602; these read VQEHVKDGPRAH and WFDKPRDARSD. Residues 3652-3665 show a composition bias toward basic residues; that stretch reads EHRHHSDHGRHSGR. Residues 3666-3690 show a composition bias toward basic and acidic residues; sequence HAGEEPGRRAAKPHARDMGRHEARP. The span at 3750–3820 shows a compositional bias: low complexity; sequence TQAQPQMQGR…QARLQPQSQP (71 aa). Arginine 3823 is modified (omega-N-methylarginine). Residues 3835–3851 are compositionally biased toward pro residues; sequence KPQPGPTTAPGPQPAGP. Low complexity predominate over residues 3856 to 3891; the sequence is QASSSKPPAAKAPQQGRAPQAQTTPGPGPAGAKPGA.

In terms of assembly, interacts with PCLO, ERC2/CAST1, RIMS1 and UNC13A. Interacts with TPRG1L. Interacts with DYNLL1 and DYNLL2; these interactions potentially link PTVs to dynein and myosin V motor complexes. Interacts with ATG5; this interaction is important for the regulation of presynaptic autophagy. Interacts (via C-terminus) with TRIO (via N-terminus). Interacts with CTBP1. Interacts with SIAH1; this interaction negatively regulates SIAH1 E3 ligase activity. Interacts (via coiled region) with DAO; the interaction is direct. Myristoylated. The N-terminal myristoylation is not sufficient for presynaptic localization. In terms of tissue distribution, expressed in brain and retina.

Its subcellular location is the cytoplasm. It localises to the presynaptic active zone. It is found in the cytoskeleton. The protein resides in the cytoplasmic vesicle. The protein localises to the secretory vesicle. Its subcellular location is the synaptic vesicle membrane. Its function is as follows. Scaffold protein of the presynaptic cytomatrix at the active zone (CAZ) which is the place in the synapse where neurotransmitter is released. After synthesis, participates in the formation of Golgi-derived membranous organelles termed Piccolo-Bassoon transport vesicles (PTVs) that are transported along axons to sites of nascent synaptic contacts. At the presynaptic active zone, regulates the spatial organization of synaptic vesicle cluster, the protein complexes that execute membrane fusion and compensatory endocytosis. Also functions in processes other than assembly such as the regulation of specific presynaptic protein ubiquitination by interacting with SIAH1 or the regulation of presynaptic autophagy by associating with ATG5. Also mediates synapse to nucleus communication leading to reconfiguration of gene expression by associating with the transcriptional corepressor CTBP1 and by subsequently reducing the size of its pool available for nuclear import. Inhibits the activity of the proportion of DAO enzyme that localizes to the presynaptic active zone, which may modulate synaptic transmission. The sequence is that of Protein bassoon from Mus musculus (Mouse).